Here is a 181-residue protein sequence, read N- to C-terminus: MGRTLENKKEIVADLKETLGESTLALVIEYQGLTVAEISDLRRRLRPSGTVCKVTKNTLMGIAIQDDEKWQPLSELLKGSSAFLLVKEDFSSAIKAYQDFQKVTKKTELRGGVMEGRLLKEPDVKALGDLPSKEQLMGQIAGAINALATKIAVGINEVPGGLARALQAVADKENGGDDSAA.

This sequence belongs to the universal ribosomal protein uL10 family. In terms of assembly, part of the ribosomal stalk of the 50S ribosomal subunit. The N-terminus interacts with L11 and the large rRNA to form the base of the stalk. The C-terminus forms an elongated spine to which L12 dimers bind in a sequential fashion forming a multimeric L10(L12)X complex.

Its function is as follows. Forms part of the ribosomal stalk, playing a central role in the interaction of the ribosome with GTP-bound translation factors. The chain is Large ribosomal subunit protein uL10 from Trichormus variabilis (strain ATCC 29413 / PCC 7937) (Anabaena variabilis).